The chain runs to 428 residues: Tyrosine--tRNA ligase (428 aa).

Y34 serves as a coordination point for L-tyrosine. Residues 39–48 carry the 'HIGH' region motif; the sequence is PTADSLHIGH. Y171 and Q175 together coordinate L-tyrosine. The 'KMSKS' region signature appears at 236–240; it reads KFGKT. K239 contributes to the ATP binding site. The 67-residue stretch at 358–424 folds into the S4 RNA-binding domain; that stretch reads VGLIDLLVDA…GKKKYFLIQV (67 aa).

This sequence belongs to the class-I aminoacyl-tRNA synthetase family. TyrS type 1 subfamily. As to quaternary structure, homodimer.

Its subcellular location is the cytoplasm. The catalysed reaction is tRNA(Tyr) + L-tyrosine + ATP = L-tyrosyl-tRNA(Tyr) + AMP + diphosphate + H(+). Catalyzes the attachment of tyrosine to tRNA(Tyr) in a two-step reaction: tyrosine is first activated by ATP to form Tyr-AMP and then transferred to the acceptor end of tRNA(Tyr). This Oceanobacillus iheyensis (strain DSM 14371 / CIP 107618 / JCM 11309 / KCTC 3954 / HTE831) protein is Tyrosine--tRNA ligase.